Here is a 142-residue protein sequence, read N- to C-terminus: Phosphoribosyl-AMP cyclohydrolase (142 aa).

Residue aspartate 92 participates in Mg(2+) binding. Position 93 (cysteine 93) interacts with Zn(2+). Residues aspartate 94 and aspartate 96 each coordinate Mg(2+). The Zn(2+) site is built by cysteine 109 and cysteine 116.

It belongs to the PRA-CH family. In terms of assembly, homodimer. Requires Mg(2+) as cofactor. The cofactor is Zn(2+).

It localises to the cytoplasm. It catalyses the reaction 1-(5-phospho-beta-D-ribosyl)-5'-AMP + H2O = 1-(5-phospho-beta-D-ribosyl)-5-[(5-phospho-beta-D-ribosylamino)methylideneamino]imidazole-4-carboxamide. It participates in amino-acid biosynthesis; L-histidine biosynthesis; L-histidine from 5-phospho-alpha-D-ribose 1-diphosphate: step 3/9. Functionally, catalyzes the hydrolysis of the adenine ring of phosphoribosyl-AMP. The chain is Phosphoribosyl-AMP cyclohydrolase from Halorhodospira halophila (strain DSM 244 / SL1) (Ectothiorhodospira halophila (strain DSM 244 / SL1)).